A 334-amino-acid polypeptide reads, in one-letter code: DNA-directed RNA polymerase subunit alpha (334 aa).

Residues 1 to 234 (MQRSLNEFLT…QQLAVFVDFD (234 aa)) form an alpha N-terminal domain (alpha-NTD) region. The segment at 248–334 (IDPILLRPVD…IRGDDRVLGG (87 aa)) is alpha C-terminal domain (alpha-CTD).

It belongs to the RNA polymerase alpha chain family. Homodimer. The RNAP catalytic core consists of 2 alpha, 1 beta, 1 beta' and 1 omega subunit. When a sigma factor is associated with the core the holoenzyme is formed, which can initiate transcription.

It catalyses the reaction RNA(n) + a ribonucleoside 5'-triphosphate = RNA(n+1) + diphosphate. Functionally, DNA-dependent RNA polymerase catalyzes the transcription of DNA into RNA using the four ribonucleoside triphosphates as substrates. The chain is DNA-directed RNA polymerase subunit alpha from Hahella chejuensis (strain KCTC 2396).